The chain runs to 165 residues: Transcription antitermination protein NusB (165 aa).

Residues 139 to 165 (EAVRSHRRNKRPAADKPVATDKPAAAE) form a disordered region.

Belongs to the NusB family.

Its function is as follows. Involved in transcription antitermination. Required for transcription of ribosomal RNA (rRNA) genes. Binds specifically to the boxA antiterminator sequence of the ribosomal RNA (rrn) operons. The protein is Transcription antitermination protein NusB of Laribacter hongkongensis (strain HLHK9).